Consider the following 602-residue polypeptide: Potassium-transporting ATPase potassium-binding subunit (602 aa).

Transmembrane regions (helical) follow at residues alanine 5–alanine 25, glycine 65–glutamine 85, glycine 136–isoleucine 156, and leucine 179–isoleucine 199. The tract at residues glutamine 221–proline 248 is disordered. Positions lysine 231–threonine 241 are enriched in basic and acidic residues. A run of 6 helical transmembrane segments spans residues leucine 283–phenylalanine 303, glutamine 312–threonine 332, glycine 419–glycine 439, alanine 458–leucine 478, isoleucine 523–isoleucine 543, and leucine 566–alanine 586.

Belongs to the KdpA family. In terms of assembly, the system is composed of three essential subunits: KdpA, KdpB and KdpC.

The protein localises to the cell inner membrane. Its function is as follows. Part of the high-affinity ATP-driven potassium transport (or Kdp) system, which catalyzes the hydrolysis of ATP coupled with the electrogenic transport of potassium into the cytoplasm. This subunit binds the periplasmic potassium ions and delivers the ions to the membrane domain of KdpB through an intramembrane tunnel. This chain is Potassium-transporting ATPase potassium-binding subunit, found in Chromobacterium violaceum (strain ATCC 12472 / DSM 30191 / JCM 1249 / CCUG 213 / NBRC 12614 / NCIMB 9131 / NCTC 9757 / MK).